The sequence spans 901 residues: Protein translocase subunit SecA (901 aa).

Residues glutamine 85, 103–107 (GEGKT), and aspartate 510 each bind ATP. Residues 848 to 901 (RINQNNLPVDENSQTTQNSETEDYSDRRIGRNEPCPCGSGKKYKHCHGSRVARQ) form a disordered region. Residues 849–866 (INQNNLPVDENSQTTQNS) show a composition bias toward polar residues. Residues cysteine 882, cysteine 884, cysteine 893, and histidine 894 each contribute to the Zn(2+) site. A compositionally biased stretch (basic residues) spans 888 to 901 (KKYKHCHGSRVARQ).

Belongs to the SecA family. As to quaternary structure, monomer and homodimer. Part of the essential Sec protein translocation apparatus which comprises SecA, SecYEG and auxiliary proteins SecDF-YajC and YidC. Forms a complex with SecB. Requires Zn(2+) as cofactor.

The protein resides in the cell inner membrane. It is found in the cytoplasm. The enzyme catalyses ATP + H2O + cellular proteinSide 1 = ADP + phosphate + cellular proteinSide 2.. Part of the Sec protein translocase complex. Interacts with the SecYEG preprotein conducting channel. Has a central role in coupling the hydrolysis of ATP to the transfer of proteins into and across the cell membrane, serving both as a receptor for the preprotein-SecB complex and as an ATP-driven molecular motor driving the stepwise translocation of polypeptide chains across the membrane. The protein is Protein translocase subunit SecA of Haemophilus influenzae (strain ATCC 51907 / DSM 11121 / KW20 / Rd).